A 907-amino-acid polypeptide reads, in one-letter code: DNA (cytosine-5)-methyltransferase CMT3 (907 aa).

Residues 1–15 (MAPSSPSSAAAPTRT) are compositionally biased toward low complexity. The disordered stretch occupies residues 1–154 (MAPSSPSSAA…RNAATRRPDE (154 aa)). The segment covering 30 to 63 (ATDEPSTKRTRRPKAETKPRKKKDEVKEEEKPPM) has biased composition (basic and acidic residues). Over residues 64-89 (EDDACGEEPDAEEMALGEEAEAEEAE) the composition is skewed to acidic residues. Composition is skewed to basic and acidic residues over residues 115 to 124 (HGSDGDHDPE) and 131 to 140 (PAKEARDKWP). The BAH domain maps to 172–297 (TLYCLHDDVY…VAYSTFANIP (126 aa)). Residues 303–323 (SGSDTASDISSDDVDSSKGKV) are disordered. An SAM-dependent MTase C5-type domain is found at 335-868 (ATLLDLYSGC…YSLGLAYQRE (534 aa)). Residues 437-500 (FVVEKLAGIC…EGYRRKILPL (64 aa)) form the Chromo domain. Cys513 is a catalytic residue.

This sequence belongs to the class I-like SAM-binding methyltransferase superfamily. C5-methyltransferase family.

The protein resides in the nucleus. It catalyses the reaction a 2'-deoxycytidine in DNA + S-adenosyl-L-methionine = a 5-methyl-2'-deoxycytidine in DNA + S-adenosyl-L-homocysteine + H(+). Involved in CpXpG DNA methylation. Plays a critical role in the maintenance of CpXpG DNA methylation and suppression of a wide spectrum of transposable element (TE) activities. Required for proper plant development in reproductive stage. The chain is DNA (cytosine-5)-methyltransferase CMT3 from Oryza sativa subsp. japonica (Rice).